Here is a 102-residue protein sequence, read N- to C-terminus: uncharacterized protein (102 aa).

Residues 5–27 (IYRSNLVIVITLFVSLSYYHTCF) traverse the membrane as a helical segment.

Its subcellular location is the host membrane. This is an uncharacterized protein from Microplitis demolitor (Parasitoid wasp).